The sequence spans 249 residues: Exosome complex component Rrp41 (249 aa).

This sequence belongs to the RNase PH family. Rrp41 subfamily. In terms of assembly, component of the archaeal exosome complex. Forms a hexameric ring-like arrangement composed of 3 Rrp41-Rrp42 heterodimers. The hexameric ring associates with a trimer of Rrp4 and/or Csl4 subunits.

The protein localises to the cytoplasm. Functionally, catalytic component of the exosome, which is a complex involved in RNA degradation. Has 3'-&gt;5' exoribonuclease activity. Can also synthesize heteromeric RNA-tails. This is Exosome complex component Rrp41 from Pyrococcus horikoshii (strain ATCC 700860 / DSM 12428 / JCM 9974 / NBRC 100139 / OT-3).